The primary structure comprises 105 residues: ATP-dependent Clp protease adapter protein ClpS (105 aa).

Residues 1–27 are disordered; it reads MVVMSAPTEPKSRPGTTGQRESAPEDV.

It belongs to the ClpS family. Binds to the N-terminal domain of the chaperone ClpA.

Functionally, involved in the modulation of the specificity of the ClpAP-mediated ATP-dependent protein degradation. This chain is ATP-dependent Clp protease adapter protein ClpS, found in Mycolicibacterium paratuberculosis (strain ATCC BAA-968 / K-10) (Mycobacterium paratuberculosis).